The primary structure comprises 904 residues: Envelope glycoprotein B (904 aa).

A signal peptide spans 1-22 (MRGGGLICALVVGALVAAVASA). Residues 23–771 (APAAPAAPRA…SGVSSFMSNP (749 aa)) lie on the Virion surface side of the membrane. Residues 40–83 (VAANGGPASRPPPVPSPATTKARKRKTKKPPKRPEATPPPDANA) are disordered. Basic residues predominate over residues 60-70 (KARKRKTKKPP). Asn-82 and Asn-136 each carry an N-linked (GlcNAc...) asparagine; by host glycan. 5 cysteine pairs are disulfide-bonded: Cys-111-Cys-570, Cys-128-Cys-526, Cys-202-Cys-266, Cys-359-Cys-407, and Cys-593-Cys-630. 2 involved in fusion and/or binding to host membrane regions span residues 168–174 (VWFGHRY) and 253–260 (RVEAFHRY). Asn-393, Asn-425, and Asn-486 each carry an N-linked (GlcNAc...) asparagine; by host glycan. Residues 467 to 490 (QDRKPRNATPAPLREAPSANASVE) form a disordered region. An N-linked (GlcNAc...) asparagine; by host glycan is attached at Asn-671. Hydrophobic membrane proximal region regions lie at residues 716-769 (IDTV…SFMS) and 728-768 (MFAG…SSFM). Residues 772 to 792 (FGALAVGLLVLAGLVAAFFAF) traverse the membrane as a helical segment. Residues 793-904 (RYVLQLQRNP…EDEAGDEDEL (112 aa)) lie on the Intravirion side of the membrane. Residues 816–835 (TSDPGGVGGEGEEGAEGGGF) form a disordered region. The short motif at 849–852 (YMAL) is the Golgi targeting element. The segment at 883–904 (KRNKARYSPLHNEDEAGDEDEL) is disordered. Residues 889 to 892 (YSPL) carry the Internalization motif motif.

Belongs to the herpesviridae glycoprotein B family. In terms of assembly, homotrimer; disulfide-linked. Binds to heparan sulfate proteoglycans. Interacts with gH/gL heterodimer.

It is found in the virion membrane. Its subcellular location is the host cell membrane. The protein localises to the host endosome membrane. The protein resides in the host Golgi apparatus membrane. Envelope glycoprotein that forms spikes at the surface of virion envelope. Essential for the initial attachment to heparan sulfate moieties of the host cell surface proteoglycans. Involved in fusion of viral and cellular membranes leading to virus entry into the host cell. Following initial binding to its host receptors, membrane fusion is mediated by the fusion machinery composed at least of gB and the heterodimer gH/gL. May be involved in the fusion between the virion envelope and the outer nuclear membrane during virion egress. The protein is Envelope glycoprotein B of Homo sapiens (Human).